We begin with the raw amino-acid sequence, 130 residues long: Small ribosomal subunit protein uS9 (130 aa).

The tract at residues 109–130 (RMKERKKYGLKGARRAPQFSKR) is disordered. Residues 111 to 130 (KERKKYGLKGARRAPQFSKR) are compositionally biased toward basic residues.

Belongs to the universal ribosomal protein uS9 family.

The sequence is that of Small ribosomal subunit protein uS9 from Listeria innocua serovar 6a (strain ATCC BAA-680 / CLIP 11262).